The sequence spans 254 residues: Syntaxin-6 (254 aa).

Residues 1-233 are Cytoplasmic-facing; sequence MSMEDPFFVV…VSHMTSDRRQ (233 aa). Residues 46 to 72 adopt a coiled-coil conformation; that stretch reads TTNELRNNLRSIEWDLEDLDETISIVE. Residues 103–138 form a disordered region; it reads KDQMSNSSMQALAERKNRQALLGESSSQSWSSGPDK. The t-SNARE coiled-coil homology domain occupies 162-224; that stretch reads QLIVEQQDEQ…DNVMKKLAKV (63 aa). A helical; Anchor for type IV membrane protein membrane pass occupies residues 234–254; sequence WCAIIVLFVILLVVLVLFLVL.

It belongs to the syntaxin family.

Its subcellular location is the golgi apparatus membrane. The protein localises to the golgi apparatus. It localises to the trans-Golgi network membrane. It is found in the recycling endosome membrane. Its function is as follows. SNARE promoting movement of transport vesicles to target membranes. Targets endosomes to the trans-Golgi network, and may therefore function in retrograde trafficking. Together with SNARE STX12, promotes movement of vesicles from endosomes to the cell membrane, and may therefore function in the endocytic recycling pathway. The chain is Syntaxin-6 (STX6) from Gallus gallus (Chicken).